The chain runs to 1141 residues: Membrane-associated protein gex-3 (1141 aa).

It belongs to the HEM-1/HEM-2 family. In terms of assembly, interacts with aco-1, gei-13 and gex-2. Interacts with gex-3. Expressed in neurons.

It is found in the cytoplasm. Rac effector required for tissue morphogenesis, cell migrations and egg laying. May play a role in egg laying and in yolk protein clatherin-mediated endocytosis by oocytes during oogenesis. Plays a role in the formation of gap junctions between EA and EP endodermal precursor cells in embryos. In Caenorhabditis elegans, this protein is Membrane-associated protein gex-3.